The following is a 661-amino-acid chain: 3-hydroxypropionyl-coenzyme A synthetase (661 aa).

Residue D526 is part of the active site. The residue at position 617 (K617) is an N6-acetyllysine.

This sequence belongs to the ATP-dependent AMP-binding enzyme family. Homotetramer.

It catalyses the reaction 3-hydroxypropanoate + ATP + CoA = 3-hydroxypropanoyl-CoA + AMP + diphosphate. Plays a role in the autotrophic CO(2) fixation pathway. Activates 3-hydroxypropionate to its CoA ester. Can also activate propionate, and to a lesser extent acrylate, acetate and butyrate. This chain is 3-hydroxypropionyl-coenzyme A synthetase, found in Metallosphaera sedula (strain ATCC 51363 / DSM 5348 / JCM 9185 / NBRC 15509 / TH2).